A 206-amino-acid chain; its full sequence is Small ribosomal subunit protein uS4A (206 aa).

The S4 RNA-binding domain occupies 98 to 163 (MRLDNVVYRL…SERFKMFAEN (66 aa)).

This sequence belongs to the universal ribosomal protein uS4 family. As to quaternary structure, part of the 30S ribosomal subunit. Contacts protein S5. The interaction surface between S4 and S5 is involved in control of translational fidelity.

Its function is as follows. One of the primary rRNA binding proteins, it binds directly to 16S rRNA where it nucleates assembly of the body of the 30S subunit. Functionally, with S5 and S12 plays an important role in translational accuracy. In Clostridium perfringens (strain SM101 / Type A), this protein is Small ribosomal subunit protein uS4A.